The chain runs to 152 residues: UPF0336 protein Tfu_2666 (152 aa).

The MaoC-like domain maps to 7–116; the sequence is YLGRAYELPE…TTITDIKSLA (110 aa).

The protein belongs to the UPF0336 family.

The sequence is that of UPF0336 protein Tfu_2666 from Thermobifida fusca (strain YX).